The chain runs to 119 residues: Large ribosomal subunit protein bL20 (119 aa).

Belongs to the bacterial ribosomal protein bL20 family.

Functionally, binds directly to 23S ribosomal RNA and is necessary for the in vitro assembly process of the 50S ribosomal subunit. It is not involved in the protein synthesizing functions of that subunit. This chain is Large ribosomal subunit protein bL20, found in Geobacillus kaustophilus (strain HTA426).